The primary structure comprises 450 residues: Adenosylhomocysteinase (450 aa).

The substrate site is built by Thr-59, Asp-135, and Glu-160. Thr-161–Thr-163 is an NAD(+) binding site. Residues Lys-190 and Asp-194 each contribute to the substrate site. Residues Asn-195, Gly-224–Gly-229, Glu-247, Ile-303–His-305, and Asn-350 contribute to the NAD(+) site.

It belongs to the adenosylhomocysteinase family. NAD(+) is required as a cofactor.

Its subcellular location is the cytoplasm. The enzyme catalyses S-adenosyl-L-homocysteine + H2O = L-homocysteine + adenosine. It participates in amino-acid biosynthesis; L-homocysteine biosynthesis; L-homocysteine from S-adenosyl-L-homocysteine: step 1/1. Adenosylhomocysteine is a competitive inhibitor of S-adenosyl-L-methionine-dependent methyl transferase reactions; therefore adenosylhomocysteinase may play a key role in the control of methylations via regulation of the intracellular concentration of adenosylhomocysteine. This Candida albicans (strain SC5314 / ATCC MYA-2876) (Yeast) protein is Adenosylhomocysteinase (SAH1).